The following is a 271-amino-acid chain: 4-hydroxy-tetrahydrodipicolinate reductase (271 aa).

Position 8-13 (8-13 (GITGRM)) interacts with NAD(+). Arginine 35 provides a ligand contact to NADP(+). Residues 100-102 (GST) and 124-127 (APNM) contribute to the NAD(+) site. Histidine 157 (proton donor/acceptor) is an active-site residue. Position 158 (histidine 158) interacts with (S)-2,3,4,5-tetrahydrodipicolinate. Lysine 161 functions as the Proton donor in the catalytic mechanism. 167-168 (GT) provides a ligand contact to (S)-2,3,4,5-tetrahydrodipicolinate.

It belongs to the DapB family.

It is found in the cytoplasm. The enzyme catalyses (S)-2,3,4,5-tetrahydrodipicolinate + NAD(+) + H2O = (2S,4S)-4-hydroxy-2,3,4,5-tetrahydrodipicolinate + NADH + H(+). The catalysed reaction is (S)-2,3,4,5-tetrahydrodipicolinate + NADP(+) + H2O = (2S,4S)-4-hydroxy-2,3,4,5-tetrahydrodipicolinate + NADPH + H(+). The protein operates within amino-acid biosynthesis; L-lysine biosynthesis via DAP pathway; (S)-tetrahydrodipicolinate from L-aspartate: step 4/4. In terms of biological role, catalyzes the conversion of 4-hydroxy-tetrahydrodipicolinate (HTPA) to tetrahydrodipicolinate. The polypeptide is 4-hydroxy-tetrahydrodipicolinate reductase (Myxococcus xanthus (strain DK1622)).